The chain runs to 253 residues: Testis-expressed protein 47 (253 aa).

As to expression, testis-specific.

This chain is Testis-expressed protein 47, found in Homo sapiens (Human).